A 372-amino-acid polypeptide reads, in one-letter code: MRSVIADSRRLVVKVGSSLVTNDGRGLDHTAIGRWAAQIAALREQGKEVVLVSSGAIAEGMQRLGWTRRPREIDELQAAAAVGQMGLAQVYESRFSEHSIRTAQILLTHADLADRERYLNARSTLLTLLRLGVVPIINENDTVVTDEIKFGDNDTLGALVANLIEGDALIILTDQQGLFTADPRKDPAATLVQQADAGTPELEAMAGGAGSSIGRGGMLTKILAAKRAAHSGANTVIASGREADILARLASGEAIGTQLIARTARMAARKQWMADHLQVRGHVVIDDGAVEKLTEGGKSLLPIGVVGVQGAFARGEVIACLNAAGREVARGLTNYSSAETKLIQRRPSGEIESVLGYMLEPELIHRDNLVLV.

An ATP-binding site is contributed by lysine 14. Substrate contacts are provided by serine 54, aspartate 141, and asparagine 153. Position 173 to 174 (173 to 174 (TD)) interacts with ATP. In terms of domain architecture, PUA spans 280–358 (RGHVVIDDGA…GEIESVLGYM (79 aa)).

The protein belongs to the glutamate 5-kinase family.

The protein resides in the cytoplasm. The catalysed reaction is L-glutamate + ATP = L-glutamyl 5-phosphate + ADP. The protein operates within amino-acid biosynthesis; L-proline biosynthesis; L-glutamate 5-semialdehyde from L-glutamate: step 1/2. Functionally, catalyzes the transfer of a phosphate group to glutamate to form L-glutamate 5-phosphate. The protein is Glutamate 5-kinase of Paraburkholderia phymatum (strain DSM 17167 / CIP 108236 / LMG 21445 / STM815) (Burkholderia phymatum).